The primary structure comprises 157 residues: Large ribosomal subunit protein eL21 (157 aa).

The tract at residues 110 to 132 (QANDQAKAEGNKAGKRVSTKRNP) is disordered.

Belongs to the eukaryotic ribosomal protein eL21 family.

The protein is Large ribosomal subunit protein eL21 (RPL21) of Tetrahymena thermophila (strain SB210).